Reading from the N-terminus, the 465-residue chain is Hydroxyacid-oxoacid transhydrogenase, mitochondrial (465 aa).

Lys-443 carries the post-translational modification N6-acetyllysine. At Ser-450 the chain carries Phosphoserine.

Belongs to the iron-containing alcohol dehydrogenase family. Hydroxyacid-oxoacid transhydrogenase subfamily. Expressed in white and brown adipose tissues, liver, and kidney. Expression is differentiation-dependent during in vitro brown and white adipogenesis.

The protein resides in the mitochondrion. The catalysed reaction is (S)-3-hydroxybutanoate + 2-oxoglutarate = (R)-2-hydroxyglutarate + acetoacetate. The enzyme catalyses 4-hydroxybutanoate + 2-oxoglutarate = (R)-2-hydroxyglutarate + succinate semialdehyde. Catalyzes the cofactor-independent reversible oxidation of gamma-hydroxybutyrate (GHB) to succinic semialdehyde (SSA) coupled to reduction of 2-ketoglutarate (2-KG) to D-2-hydroxyglutarate (D-2-HG). L-3-hydroxybutyrate (L-3-OHB) is also a substrate for HOT when using 2-KG as hydrogen acceptor, resulting in the formation of D-2-HG. This Mus musculus (Mouse) protein is Hydroxyacid-oxoacid transhydrogenase, mitochondrial (Adhfe1).